Reading from the N-terminus, the 185-residue chain is Ribosome-recycling factor (185 aa).

The protein belongs to the RRF family.

The protein resides in the cytoplasm. Functionally, responsible for the release of ribosomes from messenger RNA at the termination of protein biosynthesis. May increase the efficiency of translation by recycling ribosomes from one round of translation to another. This chain is Ribosome-recycling factor, found in Thioalkalivibrio sulfidiphilus (strain HL-EbGR7).